A 412-amino-acid chain; its full sequence is Subtilisin-like protease 6 (412 aa).

Positions 1–20 are cleaved as a signal peptide; sequence MGFITKAIPIVLAALSTVNG. The propeptide occupies 21 to 127; that stretch reads ARILEAGPHA…VRTTTNGTNL (107 aa). In terms of domain architecture, Inhibitor I9 spans 36–120; it reads KYIVVMKKDV…FIEPDFVVRT (85 aa). The region spanning 135–412 is the Peptidase S8 domain; it reads SWGLARVGSK…SKLIYNGSGK (278 aa). Catalysis depends on charge relay system residues aspartate 167 and histidine 198. Residues asparagine 252 and asparagine 264 are each glycosylated (N-linked (GlcNAc...) asparagine). Serine 358 (charge relay system) is an active-site residue. Asparagine 408 is a glycosylation site (N-linked (GlcNAc...) asparagine).

It belongs to the peptidase S8 family.

Its subcellular location is the secreted. Functionally, secreted subtilisin-like serine protease with keratinolytic activity that contributes to pathogenicity. This Arthroderma benhamiae (strain ATCC MYA-4681 / CBS 112371) (Trichophyton mentagrophytes) protein is Subtilisin-like protease 6 (SUB6).